Reading from the N-terminus, the 606-residue chain is Probable translation initiation factor IF-2 (606 aa).

Residues 11 to 230 (IRQPIVVVLG…LTGLVQRFMK (220 aa)) enclose the tr-type G domain. Residues 20–27 (GHVDHGKT) form a G1 region. Residue 20-27 (GHVDHGKT) coordinates GTP. The tract at residues 45–49 (EITQH) is G2. The G3 stretch occupies residues 85-88 (DTPG). GTP is bound by residues 85–89 (DTPGH) and 139–142 (NKID). Residues 139-142 (NKID) are G4. Residues 207 to 209 (SAK) form a G5 region.

The protein belongs to the TRAFAC class translation factor GTPase superfamily. Classic translation factor GTPase family. IF-2 subfamily.

Its function is as follows. Function in general translation initiation by promoting the binding of the formylmethionine-tRNA to ribosomes. Seems to function along with eIF-2. This chain is Probable translation initiation factor IF-2, found in Staphylothermus marinus (strain ATCC 43588 / DSM 3639 / JCM 9404 / F1).